We begin with the raw amino-acid sequence, 311 residues long: Pyrimidine-specific ribonucleoside hydrolase RihA (311 aa).

Residue His240 is part of the active site.

This sequence belongs to the IUNH family. RihA subfamily.

In terms of biological role, hydrolyzes with equal efficiency cytidine or uridine to ribose and cytosine or uracil, respectively. The protein is Pyrimidine-specific ribonucleoside hydrolase RihA of Escherichia coli O17:K52:H18 (strain UMN026 / ExPEC).